Here is a 348-residue protein sequence, read N- to C-terminus: Dihydroorotase (348 aa).

Residues His17 and His19 each coordinate Zn(2+). Residues 19 to 21 (HLR) and Asn45 contribute to the substrate site. Zn(2+) is bound by residues Lys103, His140, and His178. An N6-carboxylysine modification is found at Lys103. A substrate-binding site is contributed by His140. Leu223 provides a ligand contact to substrate. Residue Asp251 participates in Zn(2+) binding. Residue Asp251 is part of the active site. Substrate-binding residues include His255 and Ala267.

This sequence belongs to the metallo-dependent hydrolases superfamily. DHOase family. Class II DHOase subfamily. In terms of assembly, homodimer. The cofactor is Zn(2+).

It catalyses the reaction (S)-dihydroorotate + H2O = N-carbamoyl-L-aspartate + H(+). It participates in pyrimidine metabolism; UMP biosynthesis via de novo pathway; (S)-dihydroorotate from bicarbonate: step 3/3. Functionally, catalyzes the reversible cyclization of carbamoyl aspartate to dihydroorotate. The protein is Dihydroorotase of Shigella sonnei (strain Ss046).